The primary structure comprises 307 residues: UDP-3-O-acyl-N-acetylglucosamine deacetylase (307 aa).

3 residues coordinate Zn(2+): H78, H241, and D245. H268 acts as the Proton donor in catalysis.

It belongs to the LpxC family. Requires Zn(2+) as cofactor.

The enzyme catalyses a UDP-3-O-[(3R)-3-hydroxyacyl]-N-acetyl-alpha-D-glucosamine + H2O = a UDP-3-O-[(3R)-3-hydroxyacyl]-alpha-D-glucosamine + acetate. The protein operates within glycolipid biosynthesis; lipid IV(A) biosynthesis; lipid IV(A) from (3R)-3-hydroxytetradecanoyl-[acyl-carrier-protein] and UDP-N-acetyl-alpha-D-glucosamine: step 2/6. Functionally, catalyzes the hydrolysis of UDP-3-O-myristoyl-N-acetylglucosamine to form UDP-3-O-myristoylglucosamine and acetate, the committed step in lipid A biosynthesis. This chain is UDP-3-O-acyl-N-acetylglucosamine deacetylase, found in Bordetella bronchiseptica (strain ATCC BAA-588 / NCTC 13252 / RB50) (Alcaligenes bronchisepticus).